A 95-amino-acid chain; its full sequence is Co-chaperonin GroES (95 aa).

Belongs to the GroES chaperonin family. Heptamer of 7 subunits arranged in a ring. Interacts with the chaperonin GroEL.

It is found in the cytoplasm. In terms of biological role, together with the chaperonin GroEL, plays an essential role in assisting protein folding. The GroEL-GroES system forms a nano-cage that allows encapsulation of the non-native substrate proteins and provides a physical environment optimized to promote and accelerate protein folding. GroES binds to the apical surface of the GroEL ring, thereby capping the opening of the GroEL channel. In Nitratidesulfovibrio vulgaris (strain DSM 19637 / Miyazaki F) (Desulfovibrio vulgaris), this protein is Co-chaperonin GroES.